We begin with the raw amino-acid sequence, 480 residues long: MDGALMEGPLFLQSQRFGTKRWKKTWAVLYPASPHGVARLEFFDHKGSSSGGGRGGSRRLDCKMIRLAECVSVVPVTVESPPEPGASAFRLDTAQRSHLLAADAASSTAWVQILCRTAFPKGGWALAQTENPPKFSALEMLENSLYSPTWEGSQFWVTSQKTEASERCGLQGSYVLRVEAEKLTLLTLGAQSQILEPLLFWPYTLLRRYGRDKVMFSFEAGRRCPSGPGTFTFQTAQGNDIFQAVEAAIQQQKAQGKVGQGQDITRTDSHDGETEGKMAPTPVPQEPLGSPPALYAEPLDSLRIPPGPSQDSLYSDPLGSTPAGAGEGVQRKKPLYWDLYGHVQQQLLKTKLIDSKEDPIYDEPEGLAPAPLRGLYDLPQEPKDAWWCQARLKEEGYELPYNPATDDYAVPPPRSSKPTPAPKPQGLILPESGTTAGSGSKGSDTALYSQVQKSGTPGRWDCGLSRVGNDRVGVKSEGST.

Met-1 is subject to N-acetylmethionine. Residues 3 to 119 (GALMEGPLFL…WVQILCRTAF (117 aa)) enclose the PH domain. Residue Ser-48 is modified to Phosphoserine. The IRS-type PTB domain maps to 151–259 (EGSQFWVTSQ…QQQKAQGKVG (109 aa)). The segment covering 253-262 (KAQGKVGQGQ) has biased composition (low complexity). Residues 253 to 328 (KAQGKVGQGQ…GSTPAGAGEG (76 aa)) form a disordered region. Positions 265–276 (TRTDSHDGETEG) are enriched in basic and acidic residues. 2 positions are modified to phosphoserine: Ser-269 and Ser-290. 3 positions are modified to phosphotyrosine: Tyr-295, Tyr-336, and Tyr-340. At Tyr-361 the chain carries Phosphotyrosine; by INSR. Tyr-376 is subject to Phosphotyrosine. Position 397 is a phosphotyrosine; by INSR (Tyr-397). The segment at 398–480 (ELPYNPATDD…RVGVKSEGST (83 aa)) is disordered. Residue Tyr-408 is modified to Phosphotyrosine. Positions 410–423 (VPPPRSSKPTPAPK) are enriched in pro residues. Ser-415 bears the Phosphoserine mark. Residues 432–445 (SGTTAGSGSKGSDT) are compositionally biased toward low complexity. The segment covering 446–455 (ALYSQVQKSG) has biased composition (polar residues). Tyr-448 bears the Phosphotyrosine mark.

The protein belongs to the DOK family. Type A subfamily. As to quaternary structure, interacts with RasGAP and INPP5D/SHIP1. Interacts directly with phosphorylated ITGB3. Interacts with SRMS (via the SH2 and SH3 domains). In terms of processing, constitutively tyrosine-phosphorylated. Phosphorylated by TEC. Phosphorylated by LYN. Phosphorylated on tyrosine residues by the insulin receptor kinase. Results in the negative regulation of the insulin signaling pathway. Phosphorylated on tyrosine residues by SRMS.

The protein localises to the cytoplasm. It is found in the nucleus. In terms of biological role, DOK proteins are enzymatically inert adaptor or scaffolding proteins. They provide a docking platform for the assembly of multimolecular signaling complexes. DOK1 appears to be a negative regulator of the insulin signaling pathway. Modulates integrin activation by competing with talin for the same binding site on ITGB3. The polypeptide is Docking protein 1 (Dok1) (Rattus norvegicus (Rat)).